The chain runs to 372 residues: Solute carrier family 35 member F6 (372 aa).

The first 18 residues, 1-18 (MAWTKYQLFLAGLMLVTG), serve as a signal peptide directing secretion. The next 2 membrane-spanning stretches (helical) occupy residues 48–68 (FVQA…FYLL) and 89–109 (LLFL…YVAL). The 56-residue stretch at 105-160 (MYVALNMTSASSFQMLRGAVIIFTGLFSVAFLDRRLVPSQWLGILITIAGLVVVGL) folds into the EamA domain. Asn110 carries an N-linked (GlcNAc...) asparagine glycan. Helical transmembrane passes span 116–136 (SFQM…VAFL), 145–165 (WLGI…DLLS), 176–196 (VITG…QMVL), 211–231 (AVGI…VPMY), 261–281 (LIAL…FSGI), 293–312 (MVLD…ALGW), and 320–336 (ILGF…YNGL). At Thr366 the chain carries Phosphothreonine.

It belongs to the SLC35F solute transporter family. In terms of assembly, interacts with SLC25A5.

It is found in the mitochondrion. The protein localises to the lysosome membrane. Involved in the maintenance of mitochondrial membrane potential in pancreatic ductal adenocarcinoma (PDAC) cells. Promotes pancreatic ductal adenocarcinoma (PDAC) cell growth. May play a role as a nucleotide-sugar transporter. In Rattus norvegicus (Rat), this protein is Solute carrier family 35 member F6 (Slc35f6).